A 188-amino-acid chain; its full sequence is Probable chorismate pyruvate-lyase (188 aa).

Residues Arg77, Leu115, and Glu174 each contribute to the substrate site.

Belongs to the UbiC family.

It localises to the cytoplasm. It carries out the reaction chorismate = 4-hydroxybenzoate + pyruvate. It functions in the pathway cofactor biosynthesis; ubiquinone biosynthesis. In terms of biological role, removes the pyruvyl group from chorismate, with concomitant aromatization of the ring, to provide 4-hydroxybenzoate (4HB) for the ubiquinone pathway. In Shewanella loihica (strain ATCC BAA-1088 / PV-4), this protein is Probable chorismate pyruvate-lyase.